We begin with the raw amino-acid sequence, 640 residues long: 1-deoxy-D-xylulose-5-phosphate synthase (640 aa).

Thiamine diphosphate-binding positions include His-78 and 119-121; that span reads GHS. Residue Asp-151 coordinates Mg(2+). Residues 152 to 153, Asn-180, Tyr-289, and Glu-371 contribute to the thiamine diphosphate site; that span reads GA. Position 180 (Asn-180) interacts with Mg(2+).

It belongs to the transketolase family. DXPS subfamily. Homodimer. It depends on Mg(2+) as a cofactor. Thiamine diphosphate serves as cofactor.

It carries out the reaction D-glyceraldehyde 3-phosphate + pyruvate + H(+) = 1-deoxy-D-xylulose 5-phosphate + CO2. The protein operates within metabolic intermediate biosynthesis; 1-deoxy-D-xylulose 5-phosphate biosynthesis; 1-deoxy-D-xylulose 5-phosphate from D-glyceraldehyde 3-phosphate and pyruvate: step 1/1. Its function is as follows. Catalyzes the acyloin condensation reaction between C atoms 2 and 3 of pyruvate and glyceraldehyde 3-phosphate to yield 1-deoxy-D-xylulose-5-phosphate (DXP). This Bartonella quintana (strain Toulouse) (Rochalimaea quintana) protein is 1-deoxy-D-xylulose-5-phosphate synthase.